Here is a 332-residue protein sequence, read N- to C-terminus: Cytoplasmic phosphatidylinositol transfer protein 1 (332 aa).

Residues serine 119, serine 122, serine 270, and serine 274 each carry the phosphoserine modification. Low complexity predominate over residues 272–281 (PSSAPSTPLS). Residues 272-332 (PSSAPSTPLS…SEKPCRPKSE (61 aa)) are disordered. At threonine 278 the chain carries Phosphothreonine.

Belongs to the PtdIns transfer protein family. PI transfer class IIB subfamily. As to expression, widely expressed in brain, with expression in the gray matters of pre- and postnatal brains. In terms of tissue distribution, weakly expressed in brain and is rather confined to the embryonic stage.

The protein localises to the cytoplasm. It is found in the nucleus. It carries out the reaction a 1,2-diacyl-sn-glycero-3-phospho-(1D-myo-inositol)(in) = a 1,2-diacyl-sn-glycero-3-phospho-(1D-myo-inositol)(out). The catalysed reaction is a 1,2-diacyl-sn-glycero-3-phosphate(in) = a 1,2-diacyl-sn-glycero-3-phosphate(out). Catalyzes the transfer of phosphatidylinositol (PI) and phosphatidic acid (PA) between membranes. Binds PA derived from the phospholipase D signaling pathway and among the cellular PA species, preferably binds to the C16:0/16:1 and C16:1/18:1 PA species. In terms of biological role, specifically binds to phosphatidylinositol but not to other phospholipids and may play a role in the phosphoinositide-mediated signaling in the neural development. The chain is Cytoplasmic phosphatidylinositol transfer protein 1 (Pitpnc1) from Mus musculus (Mouse).